The following is a 246-amino-acid chain: Biosynthetic peptidoglycan transglycosylase (246 aa).

A helical transmembrane segment spans residues 27-47 (VVFCFFFAVFALLLIFRFVPI).

Belongs to the glycosyltransferase 51 family.

It is found in the cell inner membrane. It carries out the reaction [GlcNAc-(1-&gt;4)-Mur2Ac(oyl-L-Ala-gamma-D-Glu-L-Lys-D-Ala-D-Ala)](n)-di-trans,octa-cis-undecaprenyl diphosphate + beta-D-GlcNAc-(1-&gt;4)-Mur2Ac(oyl-L-Ala-gamma-D-Glu-L-Lys-D-Ala-D-Ala)-di-trans,octa-cis-undecaprenyl diphosphate = [GlcNAc-(1-&gt;4)-Mur2Ac(oyl-L-Ala-gamma-D-Glu-L-Lys-D-Ala-D-Ala)](n+1)-di-trans,octa-cis-undecaprenyl diphosphate + di-trans,octa-cis-undecaprenyl diphosphate + H(+). Its pathway is cell wall biogenesis; peptidoglycan biosynthesis. In terms of biological role, peptidoglycan polymerase that catalyzes glycan chain elongation from lipid-linked precursors. This is Biosynthetic peptidoglycan transglycosylase from Haemophilus influenzae (strain ATCC 51907 / DSM 11121 / KW20 / Rd).